The chain runs to 404 residues: D-galactonate dehydratase family member Ent638_1932 (404 aa).

2 residues coordinate substrate: asparagine 37 and histidine 122. Tyrosine 159 serves as the catalytic Proton donor/acceptor. Residue aspartate 212 participates in Mg(2+) binding. Catalysis depends on histidine 214, which acts as the Proton donor/acceptor. 2 residues coordinate Mg(2+): glutamate 238 and glutamate 264. Residues glutamate 264, arginine 285, histidine 314, aspartate 318, and glutamate 341 each coordinate substrate.

It belongs to the mandelate racemase/muconate lactonizing enzyme family. GalD subfamily. Mg(2+) is required as a cofactor.

The catalysed reaction is D-mannonate = 2-dehydro-3-deoxy-D-gluconate + H2O. Its function is as follows. Has low D-mannonate dehydratase activity (in vitro), suggesting that this is not a physiological substrate and that it has no significant role in D-mannonate degradation in vivo. Has no detectable activity with a panel of 70 other acid sugars (in vitro). The protein is D-galactonate dehydratase family member Ent638_1932 of Enterobacter sp. (strain 638).